A 368-amino-acid chain; its full sequence is Ribosomal RNA large subunit methyltransferase M (368 aa).

S-adenosyl-L-methionine is bound by residues Ser-199, 232 to 235 (APGG), Asp-251, Asp-271, and Asp-287. The active-site Proton acceptor is Lys-316.

It belongs to the class I-like SAM-binding methyltransferase superfamily. RNA methyltransferase RlmE family. RlmM subfamily. As to quaternary structure, monomer.

It is found in the cytoplasm. The enzyme catalyses cytidine(2498) in 23S rRNA + S-adenosyl-L-methionine = 2'-O-methylcytidine(2498) in 23S rRNA + S-adenosyl-L-homocysteine + H(+). Its function is as follows. Catalyzes the 2'-O-methylation at nucleotide C2498 in 23S rRNA. The protein is Ribosomal RNA large subunit methyltransferase M of Aromatoleum aromaticum (strain DSM 19018 / LMG 30748 / EbN1) (Azoarcus sp. (strain EbN1)).